Reading from the N-terminus, the 396-residue chain is Phosphoglycerate kinase (396 aa).

Substrate-binding positions include 21 to 23, R36, 59 to 62, R119, and R156; these read DFN and HLGK. ATP contacts are provided by residues K206, G294, E325, and 352-355; that span reads GGDS.

The protein belongs to the phosphoglycerate kinase family. In terms of assembly, monomer.

Its subcellular location is the cytoplasm. The catalysed reaction is (2R)-3-phosphoglycerate + ATP = (2R)-3-phospho-glyceroyl phosphate + ADP. Its pathway is carbohydrate degradation; glycolysis; pyruvate from D-glyceraldehyde 3-phosphate: step 2/5. This Listeria welshimeri serovar 6b (strain ATCC 35897 / DSM 20650 / CCUG 15529 / CIP 8149 / NCTC 11857 / SLCC 5334 / V8) protein is Phosphoglycerate kinase.